The sequence spans 275 residues: MSRLQDVVVNEMKVKKQIDSVEEIQEIKQFIKAYVKSHSFIQTLVLGISGGQDSTLTGKLAQLAVNELKEEGRNCKFIAVKLPYGVQQDAHEVEDALEFINPDTTYTVNIKPAVDQSVQSLSEAGIKLTDFQKGNEKARERMKVQFSIASNTQGIVLGTDHSAENITGFYTKYGDGAADIAPIFGLNKRQGKQLLAYLGAPKHLYEKVPTADLEDDKPQLPDEEALGVSYHDIDDYLEGKEIPGTARETIEKHYVRNAHKRELAYTRYSWPKYNK.

ATP is bound at residue 47–54; that stretch reads GISGGQDS. Residue Asp-53 coordinates Mg(2+). Arg-139 contacts deamido-NAD(+). Thr-159 is a binding site for ATP. Glu-164 is a binding site for Mg(2+). Residues Lys-172 and Asp-179 each coordinate deamido-NAD(+). Lys-188 and Thr-210 together coordinate ATP. Position 259–260 (259–260) interacts with deamido-NAD(+); it reads HK.

This sequence belongs to the NAD synthetase family. As to quaternary structure, homodimer.

It carries out the reaction deamido-NAD(+) + NH4(+) + ATP = AMP + diphosphate + NAD(+) + H(+). The protein operates within cofactor biosynthesis; NAD(+) biosynthesis; NAD(+) from deamido-NAD(+) (ammonia route): step 1/1. In terms of biological role, catalyzes the ATP-dependent amidation of deamido-NAD to form NAD. Uses ammonia as a nitrogen source. The polypeptide is NH(3)-dependent NAD(+) synthetase (Staphylococcus epidermidis (strain ATCC 35984 / DSM 28319 / BCRC 17069 / CCUG 31568 / BM 3577 / RP62A)).